We begin with the raw amino-acid sequence, 396 residues long: Phosphoglycerate kinase (396 aa).

Substrate-binding positions include 21 to 23, R36, 59 to 62, R119, and R156; these read DFN and HLGK. ATP is bound by residues K206, G294, E325, and 352–355; that span reads GGDS.

The protein belongs to the phosphoglycerate kinase family. As to quaternary structure, monomer.

Its subcellular location is the cytoplasm. It carries out the reaction (2R)-3-phosphoglycerate + ATP = (2R)-3-phospho-glyceroyl phosphate + ADP. Its pathway is carbohydrate degradation; glycolysis; pyruvate from D-glyceraldehyde 3-phosphate: step 2/5. The chain is Phosphoglycerate kinase from Listeria innocua serovar 6a (strain ATCC BAA-680 / CLIP 11262).